Consider the following 105-residue polypeptide: Small ribosomal subunit protein uS10 (105 aa).

This sequence belongs to the universal ribosomal protein uS10 family. Part of the 30S ribosomal subunit.

Involved in the binding of tRNA to the ribosomes. The protein is Small ribosomal subunit protein uS10 of Lawsonia intracellularis (strain PHE/MN1-00).